The chain runs to 424 residues: MAKNIQAIRGMNDYLPGETAIWQRIEGTLKNVLGSYGYSEIRLPIVEQTPLFKRAIGEVTDVVEKEMYTFEDRNGDSLTLRPEGTAGCVRAGIEHGLLYNQEQRLWYIGPMFRHERPQKGRYRQFHQLGCEVFGLQGPDIDAELIMLTARWWRALGISEHVTLELNSIGSLEARANYRDALVAFLEQHKEKLDEDCKRRMYTNPLRVLDSKNPEVQALLNDAPVLGDYLDEESREHFAGLCKLLESAGIAYTVNQRLVRGLDYYNRTVFEWVTNSLGSQGTVCAGGRYDGLVEQLGGRATPAVGFAMGLERLVLLVQAVNPEFKADPVVDIYLVASGADTQSAAMALAERLRDELPGVKLMTNHGGGNFKKQFARADKWGARVAVVLGESEVANGTAVVKDLRSGEQTAVAQDSVAAHLRTLLG.

Belongs to the class-II aminoacyl-tRNA synthetase family. Homodimer.

The protein localises to the cytoplasm. It carries out the reaction tRNA(His) + L-histidine + ATP = L-histidyl-tRNA(His) + AMP + diphosphate + H(+). The chain is Histidine--tRNA ligase from Escherichia coli O17:K52:H18 (strain UMN026 / ExPEC).